Reading from the N-terminus, the 1436-residue chain is Inositol hexakisphosphate and diphosphoinositol-pentakisphosphate kinase 1 (1436 aa).

64 to 65 (KK) is a substrate binding site. ATP is bound by residues R145, K198, H205, R224, 248 to 251 (EEFM), and 257 to 259 (DVK). A substrate-binding site is contributed by 224-225 (RK). Substrate contacts are provided by K259 and R273. ATP is bound by residues S275, D320, and 332–334 (DVN). Residue 337-340 (SFVK) participates in substrate binding. Residues 382-453 (PTTSGTMMEL…VLDITRLLLA (72 aa)) are polyphosphoinositide-binding domain. Residues 915–998 (GSAPAGCGFR…TSSSRPGGYR (84 aa)) form a disordered region. Residues S939, S982, S1032, S1068, S1140, and S1147 each carry the phosphoserine modification. Disordered regions lie at residues 1131 to 1191 (NHQA…GFSD) and 1389 to 1436 (SELS…EAIS). Low complexity predominate over residues 1163-1181 (SSGPSSTVSSAGPSSPTTV). Over residues 1405 to 1436 (LSEETELQAQEVSEEIDQESEVVDELPPEAIS) the composition is skewed to acidic residues.

It belongs to the histidine acid phosphatase family. VIP1 subfamily.

It localises to the cytoplasm. Its subcellular location is the cytosol. The protein localises to the cell membrane. The enzyme catalyses 1D-myo-inositol hexakisphosphate + ATP = 1-diphospho-1D-myo-inositol 2,3,4,5,6-pentakisphosphate + ADP. It carries out the reaction 5-diphospho-1D-myo-inositol 1,2,3,4,6-pentakisphosphate + ATP + H(+) = 1,5-bis(diphospho)-1D-myo-inositol 2,3,4,6-tetrakisphosphate + ADP. Functionally, bifunctional inositol kinase that acts in concert with the IP6K kinases IP6K1, IP6K2 and IP6K3 to synthesize the diphosphate group-containing inositol pyrophosphates diphosphoinositol pentakisphosphate, PP-InsP5, and bis-diphosphoinositol tetrakisphosphate, (PP)2-InsP4. PP-InsP5 and (PP)2-InsP4, also respectively called InsP7 and InsP8, regulate a variety of cellular processes, including apoptosis, vesicle trafficking, cytoskeletal dynamics, exocytosis, insulin signaling and neutrophil activation. Phosphorylates inositol hexakisphosphate (InsP6) at position 1 to produce PP-InsP5 which is in turn phosphorylated by IP6Ks to produce (PP)2-InsP4. Alternatively, phosphorylates PP-InsP5 at position 1, produced by IP6Ks from InsP6, to produce (PP)2-InsP4. Activated when cells are exposed to hyperosmotic stress. The protein is Inositol hexakisphosphate and diphosphoinositol-pentakisphosphate kinase 1 of Mus musculus (Mouse).